Reading from the N-terminus, the 380-residue chain is O-methyltransferase ucdC (380 aa).

S-adenosyl-L-methionine contacts are provided by residues 222–223 (GG), Asp-247, and Arg-283. His-287 functions as the Proton acceptor in the catalytic mechanism.

It belongs to the class I-like SAM-binding methyltransferase superfamily. Cation-independent O-methyltransferase family. COMT subfamily.

It participates in secondary metabolite biosynthesis. Its function is as follows. Nonribosomal peptide synthetase that mediates the biosynthesis of usterphenyllins and uscandidusins, p-terphenyl derivatives. Within the pathway, ucdC catalyzes O-methylation of the terphenyl triol intermediate produced by ucdB to yield terphenyllin carrying two methoxy moieties at C-9 and C-12. The pathway begin with the biosynthesis of 4-hydroxyphenylpyruvate (HPPA) from L-tyrosine, possibly by the aminotransferase ucdG. The nonribosomal peptide synthetase ucdA then condenses two HPPA units to produce atromentin. The key step in this pathway is the reduction and dehydration of atromentin to form a terphenyl triol intermediate, performed by the NAD-dependent dehydrogenase ucdB. Further O-methylation by the methyltransferase ucdC forms terphenyllin carrying two methoxy moieties at C-9 and C-12, and subsequent dihydroxylation at C-3 of ring A and C-15 of ring C by the flavin-dependent oxygenase ucdD leads to 3,15-dihydroxyterphenyllin. Prenylation by ucdE at position C-5 of ring A forms usterphenyllin B, and is followed by a second prenylation at position C-14 of ring C to form usterphenyllin A. The following furan ring formation that leads to uscandidusins A and B was proven to be an unexpected spontaneous non-enzymatic reaction. The polypeptide is O-methyltransferase ucdC (Aspergillus ustus).